The sequence spans 345 residues: Beta-hexosaminidase (345 aa).

Residues D60, R68, R132, and 162 to 163 (KH) each bind substrate. The active-site Proton donor/acceptor is the H175. The Nucleophile role is filled by D247.

Belongs to the glycosyl hydrolase 3 family. NagZ subfamily.

The protein resides in the cytoplasm. It catalyses the reaction Hydrolysis of terminal non-reducing N-acetyl-D-hexosamine residues in N-acetyl-beta-D-hexosaminides.. It participates in cell wall biogenesis; peptidoglycan recycling. Plays a role in peptidoglycan recycling by cleaving the terminal beta-1,4-linked N-acetylglucosamine (GlcNAc) from peptide-linked peptidoglycan fragments, giving rise to free GlcNAc, anhydro-N-acetylmuramic acid and anhydro-N-acetylmuramic acid-linked peptides. The protein is Beta-hexosaminidase of Actinobacillus pleuropneumoniae serotype 3 (strain JL03).